The primary structure comprises 272 residues: Putative phosphoenolpyruvate synthase regulatory protein (272 aa).

Residue 152–159 (GVSRSGKT) coordinates ADP.

It belongs to the pyruvate, phosphate/water dikinase regulatory protein family. PSRP subfamily.

The enzyme catalyses [pyruvate, water dikinase] + ADP = [pyruvate, water dikinase]-phosphate + AMP + H(+). It carries out the reaction [pyruvate, water dikinase]-phosphate + phosphate + H(+) = [pyruvate, water dikinase] + diphosphate. Bifunctional serine/threonine kinase and phosphorylase involved in the regulation of the phosphoenolpyruvate synthase (PEPS) by catalyzing its phosphorylation/dephosphorylation. In Methylibium petroleiphilum (strain ATCC BAA-1232 / LMG 22953 / PM1), this protein is Putative phosphoenolpyruvate synthase regulatory protein.